The sequence spans 516 residues: Endo-acting ulvan lyase (516 aa).

Positions 1–24 (MLEKTTLKNIILIHFLMFLAVVTA) are cleaved as a signal peptide. Cys38 and Cys65 are joined by a disulfide. Ca(2+) contacts are provided by Gly42, Asn44, Asp62, Ser64, Ala67, and Asn68. Tyr138 is a substrate binding site. Lys143 acts as the Proton acceptor in catalysis. Residues 191–195 (EGDGR) and 260–263 (YRVK) each bind substrate. Tyr260 functions as the Proton donor/acceptor in the catalytic mechanism. The tract at residues 289–429 (PIGDVYKLKN…VWKAIAVESL (141 aa)) is ulvan-binding domain. A propeptide spans 430 to 516 (SVDENAILAS…NKYHKKLIVK (87 aa)) (removed by the type IX secretion system (T9SS)).

It belongs to the polysaccharide lyase 28 family. Requires Ca(2+) as cofactor.

The protein resides in the secreted. Functionally, ulvan lyase involved in ulvan degradation. Ulvan is the main polysaccharide component of the Ulvales (green seaweed) cell wall. It is composed of disaccharide building blocks comprising 3-sulfated rhamnose (Rha3S) linked to D-glucuronic acid (GlcA), L-iduronic acid (IduA), or D-xylose (Xyl). Ulvan lyase catalyzes the endolytic cleavage of the glycosidic bond between Rha3S and the uronic acids GlcA or IduA, producing oligosaccharides that have unsaturated 4-deoxy-L-threo-hex-4-enopyranosiduronic acid (deltaUA) at the non-reducing end. This results eventually in the degradation of the ulvan polysaccharide into deltaUA-Rha3S disaccharides and deltaUA-Rha3S-Xyl-Rha3S tetrasaccharides. The protein is Endo-acting ulvan lyase of Formosa agariphila (strain DSM 15362 / KCTC 12365 / LMG 23005 / KMM 3901 / M-2Alg 35-1).